The chain runs to 160 residues: Cytochrome b6-f complex subunit 4 (160 aa).

Transmembrane regions (helical) follow at residues 36 to 56 (LLYIFPVVILGTIACNVGLAV), 95 to 115 (LLGVLLMVSVPAGLLTVPFLE), and 131 to 151 (TVFLIGTAVALWLGIGATLPI).

Belongs to the cytochrome b family. PetD subfamily. The 4 large subunits of the cytochrome b6-f complex are cytochrome b6, subunit IV (17 kDa polypeptide, petD), cytochrome f and the Rieske protein, while the 4 small subunits are petG, petL, petM and petN. The complex functions as a dimer.

Its subcellular location is the plastid. The protein resides in the chloroplast thylakoid membrane. In terms of biological role, component of the cytochrome b6-f complex, which mediates electron transfer between photosystem II (PSII) and photosystem I (PSI), cyclic electron flow around PSI, and state transitions. The protein is Cytochrome b6-f complex subunit 4 of Solanum bulbocastanum (Wild potato).